The sequence spans 297 residues: Tyrosine recombinase XerC (297 aa).

A Core-binding (CB) domain is found at 1–83 (MAILDEFDEH…AVKAFTAWAK (83 aa)). Residues 104 to 291 (TLPAVLRQDQ…AVSRLRVVHD (188 aa)) form the Tyr recombinase domain. Residues arginine 148, lysine 172, histidine 243, arginine 246, and histidine 269 contribute to the active site. The active-site O-(3'-phospho-DNA)-tyrosine intermediate is tyrosine 278.

This sequence belongs to the 'phage' integrase family. XerC subfamily. As to quaternary structure, forms a cyclic heterotetrameric complex composed of two molecules of XerC and two molecules of XerD.

It localises to the cytoplasm. Its function is as follows. Site-specific tyrosine recombinase, which acts by catalyzing the cutting and rejoining of the recombining DNA molecules. The XerC-XerD complex is essential to convert dimers of the bacterial chromosome into monomers to permit their segregation at cell division. It also contributes to the segregational stability of plasmids. The sequence is that of Tyrosine recombinase XerC from Mycobacterium leprae (strain TN).